A 354-amino-acid chain; its full sequence is MYRSLLHNVSLKATSRIIRRSVSSQAKGASGKRKQKAKEMESSHDRNRRWTSLGNQAEGRDPHKCSSFKVVSYNILAQDLLLEHLFLYVGIPHEFLSWQRRQQNLLRELLKLDPDILCLQEMQFDHLPVLVQRLRMGNGKKLAYVYKKKTGCRTDGCAIVYDSSKFELLDHQAVELYDQAVALLNRDNVALFARFRFKKQQEQQKEFVVATTHLLFNTKRSDVRCAQVERILEELQSFSTDTPIVLTGDFNSLPDSSPIEFLVGKNGDVDSTACPEPLHFEIIDSGEGTASTYQNEWVIVDYILRSLGSRSRHKLLPLSVYSLPSINRCIGAGQIPNYRLGSDHYALGAVFTVV.

Residues 22–59 (VSSQAKGASGKRKQKAKEMESSHDRNRRWTSLGNQAEG) form a disordered region.

This sequence belongs to the CCR4/nocturin family. In terms of tissue distribution, ubiquitously expressed in embryos.

This chain is Protein angel (angel), found in Drosophila melanogaster (Fruit fly).